A 108-amino-acid polypeptide reads, in one-letter code: Tubulin-specific chaperone A (108 aa).

An N-acetylalanine modification is found at Ala2.

The protein belongs to the TBCA family. In terms of assembly, supercomplex made of cofactors A to E. Cofactors A and D function by capturing and stabilizing tubulin in a quasi-native conformation. Cofactor E binds to the cofactor D-tubulin complex; interaction with cofactor C then causes the release of tubulin polypeptides that are committed to the native state.

The protein localises to the cytoplasm. It localises to the cytoskeleton. Functionally, tubulin-folding protein; involved in the early step of the tubulin folding pathway. The protein is Tubulin-specific chaperone A (TBCA) of Homo sapiens (Human).